A 391-amino-acid polypeptide reads, in one-letter code: DNA-directed RNA polymerase subunit Rpo1C (391 aa).

Belongs to the RNA polymerase beta' chain family. Part of the RNA polymerase complex.

It is found in the cytoplasm. It catalyses the reaction RNA(n) + a ribonucleoside 5'-triphosphate = RNA(n+1) + diphosphate. DNA-dependent RNA polymerase (RNAP) catalyzes the transcription of DNA into RNA using the four ribonucleoside triphosphates as substrates. Forms part of the jaw domain. This is DNA-directed RNA polymerase subunit Rpo1C from Thermococcus gammatolerans (strain DSM 15229 / JCM 11827 / EJ3).